The following is a 195-amino-acid chain: Large ribosomal subunit protein bL25 (195 aa).

This sequence belongs to the bacterial ribosomal protein bL25 family. CTC subfamily. Part of the 50S ribosomal subunit; part of the 5S rRNA/L5/L18/L25 subcomplex. Contacts the 5S rRNA. Binds to the 5S rRNA independently of L5 and L18.

Its function is as follows. This is one of the proteins that binds to the 5S RNA in the ribosome where it forms part of the central protuberance. The polypeptide is Large ribosomal subunit protein bL25 (Chlorobium chlorochromatii (strain CaD3)).